Reading from the N-terminus, the 632-residue chain is Probable potassium transport system protein Kup (632 aa).

The next 12 membrane-spanning stretches (helical) occupy residues 20-40 (LLVA…LYTL), 60-80 (ILSL…VMFI), 111-131 (LMVI…MITP), 146-166 (FDGI…ALFL), 178-198 (LFGP…VHGI), 216-236 (FFIV…LALT), 257-277 (WFAL…AILL), 289-309 (LLAP…ATVI), 347-367 (IYIA…VIGF), 379-399 (VAVT…MLLL), 404-424 (PVLA…FFAA), and 429-449 (IVQG…LMST).

It belongs to the HAK/KUP transporter (TC 2.A.72) family.

The protein localises to the cell inner membrane. The enzyme catalyses K(+)(in) + H(+)(in) = K(+)(out) + H(+)(out). Functionally, transport of potassium into the cell. Likely operates as a K(+):H(+) symporter. This chain is Probable potassium transport system protein Kup, found in Pseudomonas putida (strain W619).